A 590-amino-acid polypeptide reads, in one-letter code: Dystrobrevin-1 (590 aa).

The span at Met1 to Pro10 shows a compositional bias: gly residues. The interval Met1–Met25 is disordered. The ZZ-type zinc finger occupies Tyr259–Ser315. 8 residues coordinate Zn(2+): Cys264, Cys267, Cys279, Cys282, Cys288, Cys291, His301, and His305. The stretch at Ser434–Gly508 forms a coiled coil. An essential for interaction with ctn-1 region spans residues Asp468–Phe590. Residues Met484 to Arg490 form an essential for interaction with dys-1 region.

It belongs to the dystrophin family. Dystrobrevin subfamily. Component of the dystrophin glycoprotein complex (DGC). Interacts with dystrophin (dys-1) and syntrophin (stn-1) to form the DGC. Interacts (via C-terminus) with ctn-1 (via N-terminus); the interaction is required for localization of the dystrophin complex and ctn-1 near dense bodies in muscle cells. As to expression, from late embryogenesis to adulthood, expressed in neurons and muscles; particularly strong in the ventral nerve cord and in muscles of the body wall, head pharyngeal, and vulva; weaker in the intestinal muscle (at protein level).

The protein resides in the cytoplasm. Its function is as follows. Plays a role in cholinergic transmission and as a functional partner of dystrophin (dys-1), necessary for muscle maintenance. Required for localization of ctn-1 near dense bodies in muscle cells. This is Dystrobrevin-1 from Caenorhabditis elegans.